Consider the following 276-residue polypeptide: Large ribosomal subunit protein uL2 (276 aa).

Disordered regions lie at residues 1–20 (MGIK…TTND) and 219–276 (TVRG…RRKK). Residues 7–20 (NPTTNGRRNMTTND) are compositionally biased toward polar residues.

It belongs to the universal ribosomal protein uL2 family. Part of the 50S ribosomal subunit. Forms a bridge to the 30S subunit in the 70S ribosome.

Functionally, one of the primary rRNA binding proteins. Required for association of the 30S and 50S subunits to form the 70S ribosome, for tRNA binding and peptide bond formation. It has been suggested to have peptidyltransferase activity; this is somewhat controversial. Makes several contacts with the 16S rRNA in the 70S ribosome. The polypeptide is Large ribosomal subunit protein uL2 (Bacillus cereus (strain Q1)).